The sequence spans 286 residues: MLSKALNINGETGLLAVIGDPVSHSLSPKMHNLALRHCQLNYCYVALPVKPHNLVRAVQGFAAMGMRGFNATIPHKENLLPLMHTLSEEASHIGAVNTVVIDDDGKMTGHNTDAYGFITGLKEAWRSDLSGLTAIMLGSGGAARAILYGLIQAKAARVIIANRTIERAQALIEAMQPYAPNTQLMVAPTQADQLPLESCDLLINTTSMGLKGETIPYIDLARLPHHAFVSDIVYGAHPTPLLRATAQHQLGGQDGLPMLIHQGAKAFELWTGHSMPVELVEHTLRQ.

Shikimate contacts are provided by residues 25–27 (SLS) and Thr72. Lys76 acts as the Proton acceptor in catalysis. Residue Glu88 participates in NADP(+) binding. Shikimate contacts are provided by Asn97 and Asp113. NADP(+) contacts are provided by residues 138–142 (GSGGA), 162–167 (NRTIER), and Ile232. A shikimate-binding site is contributed by Tyr234. Residue Gly255 participates in NADP(+) binding.

It belongs to the shikimate dehydrogenase family. Homodimer.

It carries out the reaction shikimate + NADP(+) = 3-dehydroshikimate + NADPH + H(+). It functions in the pathway metabolic intermediate biosynthesis; chorismate biosynthesis; chorismate from D-erythrose 4-phosphate and phosphoenolpyruvate: step 4/7. In terms of biological role, involved in the biosynthesis of the chorismate, which leads to the biosynthesis of aromatic amino acids. Catalyzes the reversible NADPH linked reduction of 3-dehydroshikimate (DHSA) to yield shikimate (SA). In Magnetococcus marinus (strain ATCC BAA-1437 / JCM 17883 / MC-1), this protein is Shikimate dehydrogenase (NADP(+)).